The primary structure comprises 270 residues: Phosphatidylglycerol--prolipoprotein diacylglyceryl transferase (270 aa).

Helical transmembrane passes span 19–39 (FPVY…LWLA), 56–76 (LVLI…VIFE), 92–112 (QGGL…ILFA), and 116–136 (GVSF…GQAI). Arg-138 provides a ligand contact to a 1,2-diacyl-sn-glycero-3-phospho-(1'-sn-glycerol). Transmembrane regions (helical) follow at residues 178-198 (HPTF…LLAL), 206-226 (GELF…VEGL), and 236-256 (LRIA…FIIV).

Belongs to the Lgt family.

The protein localises to the cell membrane. It catalyses the reaction L-cysteinyl-[prolipoprotein] + a 1,2-diacyl-sn-glycero-3-phospho-(1'-sn-glycerol) = an S-1,2-diacyl-sn-glyceryl-L-cysteinyl-[prolipoprotein] + sn-glycerol 1-phosphate + H(+). It participates in protein modification; lipoprotein biosynthesis (diacylglyceryl transfer). Its function is as follows. Catalyzes the transfer of the diacylglyceryl group from phosphatidylglycerol to the sulfhydryl group of the N-terminal cysteine of a prolipoprotein, the first step in the formation of mature lipoproteins. In Bacillus thuringiensis subsp. konkukian (strain 97-27), this protein is Phosphatidylglycerol--prolipoprotein diacylglyceryl transferase.